Here is a 397-residue protein sequence, read N- to C-terminus: Mannosylglycerate synthase (397 aa).

GDP-alpha-D-mannose contacts are provided by residues 7–11 (PFKHE), Ile-35, Gln-66, Lys-76, Asp-100, and 100–101 (DA). Asp-102 is a binding site for a divalent metal cation. (R)-glycerate is bound by residues Arg-131 and 136 to 139 (AMIT). Leu-163 and Asp-192 together coordinate GDP-alpha-D-mannose. A divalent metal cation is bound at residue His-217. GDP-alpha-D-mannose-binding residues include Arg-218 and Tyr-220.

It belongs to the glycosyltransferase 78 family. As to quaternary structure, homotetramer. Dimer of dimers. The cofactor is Mg(2+). Ca(2+) serves as cofactor. It depends on Mn(2+) as a cofactor. Ni(2+) is required as a cofactor. Requires Co(2+) as cofactor.

The enzyme catalyses (R)-glycerate + GDP-alpha-D-mannose = (2R)-2-O-(alpha-D-mannosyl)-glycerate + GDP + H(+). Inhibited by GDP. In terms of biological role, involved in the biosynthesis of the stress protectant 2-O-alpha-D-mannosyl glycerate (MG) which is produced in response to growth at supraoptimal temperature and salinity, and protects several enzymes against inactivation by temperature, freeze-drying and osmotic stress. Catalyzes the condensation of alpha-GDP-D-mannose (GDP-Man) with D-glycerate to produce alpha-mannosyl-D-glycerate. It is specific for GDP-Man, but it can also use alpha-GDP-D-glucose (GDP-Glc), beta-GDP-D-fructose, alpha-UDP-D-mannose and alpha-UDP-D-glucose as sugar donors. It is specific for D-glycerate, but it can also use D-lactate and glycolate as sugar acceptors. This reaction occurs with a net retention of anomeric configuration; the newly formed glycosidic linkage has the same alpha configuration as the sugar donor. This is Mannosylglycerate synthase (mgs) from Rhodothermus marinus (Rhodothermus obamensis).